Reading from the N-terminus, the 216-residue chain is Somatotropin (216 aa).

A signal peptide spans 1 to 25 (MAPGSWFSPLLIAVVTLGLPQGAAA). Zn(2+) is bound at residue His45. Cys78 and Cys189 are oxidised to a cystine. Glu198 serves as a coordination point for Zn(2+). A disulfide bond links Cys206 and Cys214.

The protein belongs to the somatotropin/prolactin family. As to expression, pituitary gland.

It localises to the secreted. Growth hormone plays an important role in growth control. The chain is Somatotropin (GH) from Meleagris gallopavo (Wild turkey).